Here is a 1105-residue protein sequence, read N- to C-terminus: Pheromone-regulated membrane protein 10 (1105 aa).

Residues 1-11 (MSDNRPTYDTS) are compositionally biased toward polar residues. Disordered regions lie at residues 1 to 22 (MSDN…NHFH), 36 to 55 (RKQN…TASN), 65 to 123 (GSNH…FYGD), 151 to 278 (IKPK…GGGL), 385 to 473 (AGAS…FLRG), and 520 to 656 (EQKS…LRHK). The segment covering 67–82 (NHKFGNSINNNNNNAN) has biased composition (low complexity). Residues 85 to 106 (LGSSSAGTNRRSLISPTSSTHV) show a composition bias toward polar residues. A compositionally biased stretch (acidic residues) spans 162 to 178 (DSSDDDGNNLDEVEDET). Residues 185-197 (LNQNHPPQQYYET) show a composition bias toward polar residues. Residues 198–210 (DSSDEDEEDDDEV) are compositionally biased toward acidic residues. Over residues 390-413 (LDHSQQSSAAPSTEITPSQSPNQH) the composition is skewed to polar residues. Residues 417-439 (EKSNNNENNQQSTTVESSSSTSS) show a composition bias toward low complexity. A compositionally biased stretch (basic and acidic residues) spans 446–459 (LARRRASEERKKAE). 3 stretches are compositionally biased toward polar residues: residues 520–539 (EQKS…GTAL), 592–606 (RTNT…NSEE), and 624–633 (MNANLPSFQN). 10 helical membrane passes run 782 to 802 (PPWL…PFAF), 809 to 829 (LPIS…VSSI), 835 to 855 (SVFE…IGSI), 860 to 880 (LFCF…GYII), 903 to 923 (VIYS…YGWI), 938 to 958 (AIDE…LGLI), 963 to 983 (WSQV…SFFA), 986 to 1006 (HFST…GVLG), 1015 to 1035 (GMAV…GIAS), and 1075 to 1095 (VEVS…IYPF).

Belongs to the ThrE exporter (TC 2.A.79) family.

It is found in the membrane. In Candida albicans (strain SC5314 / ATCC MYA-2876) (Yeast), this protein is Pheromone-regulated membrane protein 10 (PRM10).